Here is a 977-residue protein sequence, read N- to C-terminus: Macrophage colony-stimulating factor 1 receptor (977 aa).

The signal sequence occupies residues 1-19 (MELGPPLVLLLATVWHGQG). Residues 20 to 515 (APVIEPSGPE…QLPDESLFTP (496 aa)) are Extracellular-facing. Ig-like C2-type domains lie at 24–104 (EPSG…VKDP), 107–197 (SWNL…KVNR), 204–298 (QIKL…VVES), 299–397 (AYLN…LTLR), and 398–503 (YPPE…SLGQ). Cystine bridges form between Cys-42–Cys-84, Cys-127–Cys-177, and Cys-224–Cys-278. N-linked (GlcNAc...) asparagine glycosylation is found at Asn-45 and Asn-73. Residues Asn-302, Asn-335, Asn-389, Asn-410, Asn-449, Asn-478, and Asn-491 are each glycosylated (N-linked (GlcNAc...) asparagine). A disulfide bridge links Cys-417 with Cys-483. Residues 516–536 (VVVACMSVMSLLVLLLLLLLY) traverse the membrane as a helical segment. At 537 to 977 (KYKQKPKYQV…LLQPNNYQFC (441 aa)) the chain is on the cytoplasmic side. A regulatory juxtamembrane domain region spans residues 540 to 572 (QKPKYQVRWKIIERYEGNSYTFIDPTQLPYNEK). A phosphotyrosine; by autocatalysis mark is found at Tyr-544 and Tyr-559. Residues 580 to 913 (LQFGKTLGAG…ICFLLQEQAR (334 aa)) form the Protein kinase domain. Residues 586 to 594 (LGAGAFGKV) and Lys-614 contribute to the ATP site. Phosphotyrosine; by autocatalysis is present on residues Tyr-697 and Tyr-706. Phosphoserine is present on Ser-711. Tyr-721 is subject to Phosphotyrosine; by autocatalysis. The active-site Proton acceptor is Asp-776. Residues 794–816 (DFGLARDIMNDSNYVVKGNARLP) form an activation loop region. Tyr-807 and Tyr-921 each carry phosphotyrosine; by autocatalysis. The tract at residues 921–957 (YANLPSSGGSSGSDSGGGSSGGSSSEPEEESSSEHLA) is disordered. Residues 929-941 (GSSGSDSGGGSSG) show a composition bias toward gly residues. Tyr-974 carries the post-translational modification Phosphotyrosine; by autocatalysis.

This sequence belongs to the protein kinase superfamily. Tyr protein kinase family. CSF-1/PDGF receptor subfamily. As to quaternary structure, monomer. Homodimer. Interacts with CSF1 and IL34. Interaction with dimeric CSF1 or IL34 leads to receptor homodimerization. Interacts with INPPL1/SHIP2 and THOC5. Interacts (tyrosine phosphorylated) with PLCG2 (via SH2 domain). Interacts (tyrosine phosphorylated) with PIK3R1 (via SH2 domain). Interacts (tyrosine phosphorylated) with FYN, YES1 and SRC (via SH2 domain). Interacts (tyrosine phosphorylated) with CBL, GRB2 and SLA2. In terms of processing, autophosphorylated in response to CSF1 or IL34 binding. Phosphorylation at Tyr-559 is important for normal down-regulation of signaling by ubiquitination, internalization and degradation. Phosphorylation at Tyr-559 and Tyr-807 is important for interaction with SRC family members, including FYN, YES1 and SRC, and for subsequent activation of these protein kinases. Phosphorylation at Tyr-697 and Tyr-921 is important for interaction with GRB2. Phosphorylation at Tyr-721 is important for interaction with PIK3R1. Phosphorylation at Tyr-721 and Tyr-807 is important for interaction with PLCG2. Phosphorylation at Tyr-974 is important for interaction with CBL. Dephosphorylation by PTPN2 negatively regulates downstream signaling and macrophage differentiation. Ubiquitinated. Becomes rapidly polyubiquitinated after autophosphorylation, leading to its degradation. As to expression, widely expressed.

It is found in the cell membrane. It catalyses the reaction L-tyrosyl-[protein] + ATP = O-phospho-L-tyrosyl-[protein] + ADP + H(+). Present in an inactive conformation in the absence of bound ligand. CSF1 or IL34 binding leads to dimerization and activation by autophosphorylation on tyrosine residues. Inhibited by imatinib/STI-571 (Gleevec), dasatinib, sunitinib/SU11248, lestaurtinib/CEP-701, midostaurin/PKC-412, Ki20227, linifanib/ABT-869, Axitinib/AG013736, sorafenib/BAY 43-9006 and GW2580. Its function is as follows. Tyrosine-protein kinase that acts as a cell-surface receptor for CSF1 and IL34 and plays an essential role in the regulation of survival, proliferation and differentiation of hematopoietic precursor cells, especially mononuclear phagocytes, such as macrophages and monocytes. Promotes the release of pro-inflammatory chemokines in response to IL34 and CSF1, and thereby plays an important role in innate immunity and in inflammatory processes. Plays an important role in the regulation of osteoclast proliferation and differentiation, the regulation of bone resorption, and is required for normal bone and tooth development. Required for normal male and female fertility, and for normal development of milk ducts and acinar structures in the mammary gland during pregnancy. Promotes reorganization of the actin cytoskeleton, regulates formation of membrane ruffles, cell adhesion and cell migration, and promotes cancer cell invasion. Activates several signaling pathways in response to ligand binding, including the ERK1/2 and the JNK pathway. Phosphorylates PIK3R1, PLCG2, GRB2, SLA2 and CBL. Activation of PLCG2 leads to the production of the cellular signaling molecules diacylglycerol and inositol 1,4,5-trisphosphate, that then lead to the activation of protein kinase C family members, especially PRKCD. Phosphorylation of PIK3R1, the regulatory subunit of phosphatidylinositol 3-kinase, leads to activation of the AKT1 signaling pathway. Activated CSF1R also mediates activation of the MAP kinases MAPK1/ERK2 and/or MAPK3/ERK1, and of the SRC family kinases SRC, FYN and YES1. Activated CSF1R transmits signals both via proteins that directly interact with phosphorylated tyrosine residues in its intracellular domain, or via adapter proteins, such as GRB2. Promotes activation of STAT family members STAT3, STAT5A and/or STAT5B. Promotes tyrosine phosphorylation of SHC1 and INPP5D/SHIP-1. Receptor signaling is down-regulated by protein phosphatases, such as INPP5D/SHIP-1, that dephosphorylate the receptor and its downstream effectors, and by rapid internalization of the activated receptor. In the central nervous system, may play a role in the development of microglia macrophages. The sequence is that of Macrophage colony-stimulating factor 1 receptor (Csf1r) from Mus musculus (Mouse).